The primary structure comprises 464 residues: Glucan 1,3-beta-glucosidase 3 (464 aa).

It belongs to the glycosyl hydrolase 5 (cellulase A) family.

The enzyme catalyses Successive hydrolysis of beta-D-glucose units from the non-reducing ends of (1-&gt;3)-beta-D-glucans, releasing alpha-glucose.. This chain is Glucan 1,3-beta-glucosidase 3 (exg3), found in Schizosaccharomyces pombe (strain 972 / ATCC 24843) (Fission yeast).